The primary structure comprises 234 residues: Ribonuclease 3 (234 aa).

The RNase III domain maps to R6–G134. E47 provides a ligand contact to Mg(2+). Residue D51 is part of the active site. Positions 120 and 123 each coordinate Mg(2+). The active site involves E123. A DRBM domain is found at D162–K231.

Belongs to the ribonuclease III family. As to quaternary structure, homodimer. It depends on Mg(2+) as a cofactor.

The protein localises to the cytoplasm. The enzyme catalyses Endonucleolytic cleavage to 5'-phosphomonoester.. Its function is as follows. Digests double-stranded RNA. Involved in the processing of primary rRNA transcript to yield the immediate precursors to the large and small rRNAs (23S and 16S). Processes some mRNAs, and tRNAs when they are encoded in the rRNA operon. Processes pre-crRNA and tracrRNA of type II CRISPR loci if present in the organism. This is Ribonuclease 3 from Bdellovibrio bacteriovorus (strain ATCC 15356 / DSM 50701 / NCIMB 9529 / HD100).